A 75-amino-acid chain; its full sequence is Small ribosomal subunit protein bS18 (75 aa).

It belongs to the bacterial ribosomal protein bS18 family. In terms of assembly, part of the 30S ribosomal subunit. Forms a tight heterodimer with protein bS6.

In terms of biological role, binds as a heterodimer with protein bS6 to the central domain of the 16S rRNA, where it helps stabilize the platform of the 30S subunit. The polypeptide is Small ribosomal subunit protein bS18 (Roseobacter denitrificans (strain ATCC 33942 / OCh 114) (Erythrobacter sp. (strain OCh 114))).